Reading from the N-terminus, the 202-residue chain is Putative pituitary tumor-transforming gene 3 protein (202 aa).

The D-box motif lies at 61-64 (RKAL). The SH3-binding motif lies at 163 to 173 (PPSPLKMPSPP).

The protein belongs to the securin family.

It is found in the cytoplasm. The protein localises to the nucleus. This chain is Putative pituitary tumor-transforming gene 3 protein (PTTG3), found in Pan troglodytes (Chimpanzee).